The sequence spans 709 residues: MPYLDHAGSTLPSKIQLEEVAKQQSQLILANPHSHHATAVKTKQIVNSARLRILQYFNTTSDDYFVVLTNNTTHGLKIVAENFKFGQKTHSILNIASVLHGGSSNLGYLYDSHHSVVGLRHVVNGKVNSISCVNEESILEHEIPDVEHSLFVLTAMSNFCGKKYSLESVHRLQEKGWAVCLDAASFVSSSALDLSQQRPNFIAFSFYKIFGYPTGIGALLVRKDSAHLIEKTSFAGGTVQSVDEMSMFFVLREFERAFEEGTLNYYGIAQLQKGFEEIERCGGISSIRNLTHHLCKNALYMLKSKKHPNGRPVVEIYSQSEQFENPDKQGPIVAFNLKRPDGGYYGYTEVEKMCAIFGIELRTGCFCNIGACKKYLGITSEMIQENMSKGKRCGDEIDLINGTPTGAIRISFGRTSTEHDITALEQMIDTCFTEGEHQAQSKPDPMNIESYSPTVVNLFSFPIKSVGSVGRKRYELTARGFKNDREFLIVNDDVTLNLKTHPELCMLTATIVDDDQLLIQTFDQNENLVLPMSLSLKDNGAKLVCKNTIATMDCGDKVGKWLDNALDRQNCRLLRVAEDSKKNFVNDSPFLLINEASVYMLSRYINMEVREILTRFRSNIVVRGLPPFIEDTAKRLSIENLEFEVVDKCTRCEMICVDPMTGEKDPSLLLALRDYRNKQKMTFGIYIRQTNFESGQYLESGMSVNFSTD.

Residue Lys-208 is modified to N6-(pyridoxal phosphate)lysine. Cys-367 is a catalytic residue. The MOSC domain maps to Asp-563–Ser-707.

This sequence belongs to the class-V pyridoxal-phosphate-dependent aminotransferase family. MOCOS subfamily. Pyridoxal 5'-phosphate serves as cofactor.

It carries out the reaction Mo-molybdopterin + L-cysteine + AH2 = thio-Mo-molybdopterin + L-alanine + A + H2O. It participates in cofactor biosynthesis; molybdopterin biosynthesis. Functionally, sulfurates the molybdenum cofactor. Sulfation of molybdenum is essential for xanthine dehydrogenase (XDH) and aldehyde oxidase (ADO) enzymes in which molybdenum cofactor is liganded by 1 oxygen and 1 sulfur atom in active form. This Caenorhabditis elegans protein is Molybdenum cofactor sulfurase.